The following is a 651-amino-acid chain: Zinc metalloproteinase nas-32 (651 aa).

The N-terminal stretch at 1–21 (MRRFFICYIGFLSIFLDFILA) is a signal peptide. Residues 22-202 (DKDNNSEEER…EQSSKSRRKK (181 aa)) constitute a propeptide that is removed on maturation. Residues Asn-25, Asn-72, and Asn-251 are each glycosylated (N-linked (GlcNAc...) asparagine). Positions 203–394 (RQIDNLAQFW…KMLNTHYSCS (192 aa)) constitute a Peptidase M12A domain. 6 disulfides stabilise this stretch: Cys-245–Cys-393, Cys-264–Cys-283, Cys-395–Cys-412, Cys-415–Cys-426, Cys-434–Cys-467, and Cys-495–Cys-516. His-291 serves as a coordination point for Zn(2+). Glu-292 is an active-site residue. The Zn(2+) site is built by His-295 and His-301. The EGF-like domain occupies 380–433 (TFLDLKMLNTHYSCSCPTILSCGNGGFTNPANCSVCICPYGFGGALCTERTDYG). Asn-411 carries N-linked (GlcNAc...) asparagine glycosylation. In terms of domain architecture, CUB spans 434-554 (CGSTLTATDT…TTYTWSYRYV (121 aa)). Asn-453 carries an N-linked (GlcNAc...) asparagine glycan. An N-linked (GlcNAc...) asparagine glycan is attached at Asn-557. Disulfide bonds link Cys-610-Cys-647, Cys-619-Cys-640, and Cys-628-Cys-644. One can recognise a ShKT domain in the interval 610 to 647 (CKDRFPKSQCSTYSTNGMCTQQPPLAAEFSCAETCGFC).

The cofactor is Zn(2+). In terms of tissue distribution, expressed in pharyngeal, anal depressor, intestinal and vulva muscles, head neurons and head mesodermal cell.

The protein localises to the secreted. Functionally, metalloprotease. In Caenorhabditis elegans, this protein is Zinc metalloproteinase nas-32 (nas-32).